Consider the following 96-residue polypeptide: UPF0235 protein VC0395_A0010/VC395_0502 (96 aa).

It belongs to the UPF0235 family.

This is UPF0235 protein VC0395_A0010/VC395_0502 from Vibrio cholerae serotype O1 (strain ATCC 39541 / Classical Ogawa 395 / O395).